A 107-amino-acid chain; its full sequence is uncharacterized protein (107 aa).

Residues 13-33 (VLIVTFLSSFIFIVWLPVALV) form a helical membrane-spanning segment.

The protein resides in the membrane. This is an uncharacterized protein from Saccharomyces cerevisiae (strain ATCC 204508 / S288c) (Baker's yeast).